The chain runs to 607 residues: COMPASS component cclA (607 aa).

Residues 1 to 19 (MASTHAAGSPAPSSSINSP) are compositionally biased toward low complexity. Disordered stretches follow at residues 1–22 (MAST…PILH) and 34–86 (GEGS…KSVA). Positions 57 to 69 (SKRNKRDSRKKRE) are enriched in basic residues. Residues 157–376 (IADTDFPHIK…YAFNLKETPA (220 aa)) form the B30.2/SPRY domain. Residues 587–607 (NTPITDVPVPPEPEDTPMTGG) form a disordered region.

This sequence belongs to the cclA family. As to quaternary structure, component of the COMPASS complex.

It localises to the nucleus. It is found in the chromosome. Its subcellular location is the telomere. In terms of biological role, component of the COMPASS (Set1C) complex that specifically mono-, di- and trimethylates histone H3 to form H3K4me1/2/3, which subsequently plays a role in telomere length maintenance and transcription elongation regulation. Controls the production of several secondary metabolites, including monodictyphenone, emodin and emodin derivatives, as well as two anti-osteoporosis polyketides, F9775A and F9775B. This chain is COMPASS component cclA, found in Emericella nidulans (strain FGSC A4 / ATCC 38163 / CBS 112.46 / NRRL 194 / M139) (Aspergillus nidulans).